Here is a 65-residue protein sequence, read N- to C-terminus: Small vasohibin-binding protein (65 aa).

Over residues 1–22 (MEPACRKDKQKQQTPTRGDRTK) the composition is skewed to basic and acidic residues. The segment at 1–30 (MEPACRKDKQKQQTPTRGDRTKQKTAQQEL) is disordered. Residues 31-51 (KQRQRAEIYALNKVMTELEQQ) adopt a coiled-coil conformation.

It belongs to the SVBP family.

It localises to the cytoplasm. Its subcellular location is the secreted. The protein resides in the cytoskeleton. Enhances the tyrosine carboxypeptidase activity of vash1 and vash2, thereby promoting the removal of the C-terminal tyrosine residue of alpha-tubulin. Also required to enhance the solubility and secretion of vash1 and vash2. May play a role in axon and excitatory synapse formation. This is Small vasohibin-binding protein from Danio rerio (Zebrafish).